A 398-amino-acid chain; its full sequence is Aspartic protease 3 (398 aa).

Positions 1-17 (MSGRVFLLLALVALASA) are cleaved as a signal peptide. Residues 18-55 (IQRIKLEKRTYTREQYKFGSIQEHLKAKYVPGYIPNKD) constitute a propeptide, removed in mature form. The Peptidase A1 domain occupies 69-392 (YYGPVTIGTP…DHGNKRVGFA (324 aa)). D87 is an active-site residue. C100 and C107 form a disulfide bridge. Residue D279 is part of the active site. Cysteines 313 and 351 form a disulfide. N-linked (GlcNAc...) asparagine glycosylation is present at N321.

This sequence belongs to the peptidase A1 family. As to expression, highly expressed in intestine and to a lower extent in body wall muscles, hypodermis and neurons.

It localises to the cytoplasm. The protein localises to the lysosome. Its subcellular location is the secreted. In terms of biological role, aspartic protease. Part of the necrosis cell death pathway. Involved in neuronal cell degeneration. Involved in heat stress response. The protein is Aspartic protease 3 of Caenorhabditis elegans.